Consider the following 843-residue polypeptide: Protein P (843 aa).

Residues 1–177 (MPLSYQHFRR…FCGSPYSWEQ (177 aa)) form a terminal protein domain (TP) region. The spacer stretch occupies residues 178–346 (ELQHGSTSLN…YCLSHIINLL (169 aa)). A disordered region spans residues 249-301 (TPTRWPSGVEPSGTGHSDNLATRSTSRFHQSEVRKETNPSLSTSKGHTSTGHA). 2 stretches are compositionally biased toward polar residues: residues 262-276 (TGHS…TSRF) and 286-299 (NPSL…TSTG). Residues 347–690 (EDWGPCYEHG…YMNLYPVARQ (344 aa)) are polymerase/reverse transcriptase domain (RT). The 244-residue stretch at 357-600 (EHHIRTPRTP…YSLHFMGYII (244 aa)) folds into the Reverse transcriptase domain. Asp-429, Asp-551, and Asp-552 together coordinate Mg(2+).

This sequence belongs to the hepadnaviridae P protein family.

The catalysed reaction is DNA(n) + a 2'-deoxyribonucleoside 5'-triphosphate = DNA(n+1) + diphosphate. The enzyme catalyses Endonucleolytic cleavage to 5'-phosphomonoester.. With respect to regulation, activated by host HSP70 and HSP40 in vitro to be able to bind the epsilon loop of the pgRNA. Because deletion of the RNase H region renders the protein partly chaperone-independent, the chaperones may be needed indirectly to relieve occlusion of the RNA-binding site by this domain. Inhibited by several reverse-transcriptase inhibitors: Lamivudine, Adefovir and Entecavir. Functionally, multifunctional enzyme that converts the viral RNA genome into dsDNA in viral cytoplasmic capsids. This enzyme displays a DNA polymerase activity that can copy either DNA or RNA templates, and a ribonuclease H (RNase H) activity that cleaves the RNA strand of RNA-DNA heteroduplexes in a partially processive 3'- to 5'-endonucleasic mode. Neo-synthesized pregenomic RNA (pgRNA) are encapsidated together with the P protein, and reverse-transcribed inside the nucleocapsid. Initiation of reverse-transcription occurs first by binding the epsilon loop on the pgRNA genome, and is initiated by protein priming, thereby the 5'-end of (-)DNA is covalently linked to P protein. Partial (+)DNA is synthesized from the (-)DNA template and generates the relaxed circular DNA (RC-DNA) genome. After budding and infection, the RC-DNA migrates in the nucleus, and is converted into a plasmid-like covalently closed circular DNA (cccDNA). The activity of P protein does not seem to be necessary for cccDNA generation, and is presumably released from (+)DNA by host nuclear DNA repair machinery. This chain is Protein P, found in Homo sapiens (Human).